Here is a 341-residue protein sequence, read N- to C-terminus: HTH-type transcriptional repressor PurR (341 aa).

The region spanning 2 to 56 (ATIKDVAKHAGVSTTTVSHVINKTRFVAENTKAAVWAAIKELHYSPSAVARSLKV) is the HTH lacI-type domain. The H-T-H motif DNA-binding region spans 4-23 (IKDVAKHAGVSTTTVSHVIN). The DNA-binding element occupies 48–56 (SAVARSLKV). Tyr73, Arg190, Thr192, Phe221, and Asp275 together coordinate hypoxanthine.

Homodimer.

It functions in the pathway purine metabolism; purine nucleotide biosynthesis [regulation]. Functionally, is the main repressor of the genes involved in the de novo synthesis of purine nucleotides, regulating purB, purC, purEK, purF, purHD, purL, purMN and guaBA expression. PurR is allosterically activated to bind its cognate DNA by binding the purine corepressors, hypoxanthine or guanine, thereby effecting transcription repression. This is HTH-type transcriptional repressor PurR from Yersinia enterocolitica serotype O:8 / biotype 1B (strain NCTC 13174 / 8081).